Reading from the N-terminus, the 99-residue chain is U8-agatoxin-Ao1a (99 aa).

Positions 1–19 (MKSLLFVTIAVYFVAQAVT) are cleaved as a signal peptide. Residues 20-45 (ANLLSNFLGSSLIDDDKGNMHKLYKR) constitute a propeptide that is removed on maturation.

It belongs to the neurotoxin 02 (plectoxin) family. Contains 5 disulfide bonds. Expressed by the venom gland.

The protein resides in the secreted. The sequence is that of U8-agatoxin-Ao1a from Agelena orientalis (Funnel-web spider).